A 379-amino-acid chain; its full sequence is Chaperone protein DnaJ (379 aa).

Residues E5–G69 enclose the J domain. A CR-type zinc finger spans residues G141–A223. Residues C154, C157, C171, C174, C197, C200, C211, and C214 each contribute to the Zn(2+) site. CXXCXGXG motif repeat units lie at residues C154 to G161, C171 to G178, C197 to G204, and C211 to G218.

It belongs to the DnaJ family. In terms of assembly, homodimer. Zn(2+) is required as a cofactor.

It localises to the cytoplasm. In terms of biological role, participates actively in the response to hyperosmotic and heat shock by preventing the aggregation of stress-denatured proteins and by disaggregating proteins, also in an autonomous, DnaK-independent fashion. Unfolded proteins bind initially to DnaJ; upon interaction with the DnaJ-bound protein, DnaK hydrolyzes its bound ATP, resulting in the formation of a stable complex. GrpE releases ADP from DnaK; ATP binding to DnaK triggers the release of the substrate protein, thus completing the reaction cycle. Several rounds of ATP-dependent interactions between DnaJ, DnaK and GrpE are required for fully efficient folding. Also involved, together with DnaK and GrpE, in the DNA replication of plasmids through activation of initiation proteins. In Lactococcus lactis subsp. cremoris (strain MG1363), this protein is Chaperone protein DnaJ.